The primary structure comprises 367 residues: UDP-N-acetylglucosamine--N-acetylmuramyl-(pentapeptide) pyrophosphoryl-undecaprenol N-acetylglucosamine transferase (367 aa).

UDP-N-acetyl-alpha-D-glucosamine-binding positions include 15–17 (TGG), Asn-127, Arg-163, Ser-191, Ile-249, and Gln-294.

The protein belongs to the glycosyltransferase 28 family. MurG subfamily.

The protein localises to the cell inner membrane. The catalysed reaction is di-trans,octa-cis-undecaprenyl diphospho-N-acetyl-alpha-D-muramoyl-L-alanyl-D-glutamyl-meso-2,6-diaminopimeloyl-D-alanyl-D-alanine + UDP-N-acetyl-alpha-D-glucosamine = di-trans,octa-cis-undecaprenyl diphospho-[N-acetyl-alpha-D-glucosaminyl-(1-&gt;4)]-N-acetyl-alpha-D-muramoyl-L-alanyl-D-glutamyl-meso-2,6-diaminopimeloyl-D-alanyl-D-alanine + UDP + H(+). It functions in the pathway cell wall biogenesis; peptidoglycan biosynthesis. Functionally, cell wall formation. Catalyzes the transfer of a GlcNAc subunit on undecaprenyl-pyrophosphoryl-MurNAc-pentapeptide (lipid intermediate I) to form undecaprenyl-pyrophosphoryl-MurNAc-(pentapeptide)GlcNAc (lipid intermediate II). The protein is UDP-N-acetylglucosamine--N-acetylmuramyl-(pentapeptide) pyrophosphoryl-undecaprenol N-acetylglucosamine transferase of Burkholderia ambifaria (strain MC40-6).